Reading from the N-terminus, the 545-residue chain is 2-succinyl-5-enolpyruvyl-6-hydroxy-3-cyclohexene-1-carboxylate synthase (545 aa).

A disordered region spans residues 184–209 (PLVPDPEPHGAPTPAGRPGGRPWTYT). The span at 195–205 (PTPAGRPGGRP) shows a compositional bias: low complexity.

This sequence belongs to the TPP enzyme family. MenD subfamily. In terms of assembly, homodimer. It depends on Mg(2+) as a cofactor. Mn(2+) serves as cofactor. Requires thiamine diphosphate as cofactor.

It carries out the reaction isochorismate + 2-oxoglutarate + H(+) = 5-enolpyruvoyl-6-hydroxy-2-succinyl-cyclohex-3-ene-1-carboxylate + CO2. It functions in the pathway quinol/quinone metabolism; 1,4-dihydroxy-2-naphthoate biosynthesis; 1,4-dihydroxy-2-naphthoate from chorismate: step 2/7. The protein operates within quinol/quinone metabolism; menaquinone biosynthesis. Functionally, catalyzes the thiamine diphosphate-dependent decarboxylation of 2-oxoglutarate and the subsequent addition of the resulting succinic semialdehyde-thiamine pyrophosphate anion to isochorismate to yield 2-succinyl-5-enolpyruvyl-6-hydroxy-3-cyclohexene-1-carboxylate (SEPHCHC). The sequence is that of 2-succinyl-5-enolpyruvyl-6-hydroxy-3-cyclohexene-1-carboxylate synthase from Mycobacterium avium (strain 104).